Here is a 457-residue protein sequence, read N- to C-terminus: Embryogenesis-associated protein EMB8 (457 aa).

The interval 39-59 (KKPAAGACEEQDELTSGSAAR) is disordered. Positions 151-391 (PVLILLPGLT…LVVTPNGGHL (241 aa)) constitute an AB hydrolase-1 domain. Active-site charge relay system residues include S231, D361, and H390. Residues 438–447 (VDSVHTRETN) are compositionally biased toward basic and acidic residues. Residues 438–457 (VDSVHTRETNNYKSPIENVN) are disordered. The span at 448 to 457 (NYKSPIENVN) shows a compositional bias: polar residues.

The protein belongs to the AB hydrolase superfamily. AB hydrolase 4 family.

The chain is Embryogenesis-associated protein EMB8 (EMB8) from Picea glauca (White spruce).